Consider the following 134-residue polypeptide: Small ribosomal subunit protein uS11 (134 aa).

Belongs to the universal ribosomal protein uS11 family. As to quaternary structure, part of the 30S ribosomal subunit. Interacts with proteins S7 and S18. Binds to IF-3.

Located on the platform of the 30S subunit, it bridges several disparate RNA helices of the 16S rRNA. Forms part of the Shine-Dalgarno cleft in the 70S ribosome. The sequence is that of Small ribosomal subunit protein uS11 from Paraburkholderia xenovorans (strain LB400).